The following is a 1184-amino-acid chain: uncharacterized protein (1184 aa).

Disordered regions lie at residues 115 to 152 (ETSSQPSQEVYHPHAGKAAQSAHVMNSTESRPSSAHVS) and 397 to 426 (TYKPKSSVNGSVYRSKSVKSTTSHNKVPER). Polar residues-rich tracts occupy residues 137 to 152 (HVMNSTESRPSSAHVS) and 397 to 421 (TYKPKSSVNGSVYRSKSVKSTTSHN). Ser-686 is subject to Phosphoserine. Composition is skewed to basic and acidic residues over residues 705–767 (LSER…ESAH), 783–792 (FEHETEPSHY), 849–863 (SHAHDNAVNEKRDLG), and 891–902 (YLHDEKTRDTLT). 2 disordered regions span residues 705–870 (LSER…FGDV) and 890–1017 (DYLH…SSPK). Ser-905 is subject to Phosphoserine. The span at 920-932 (EDHPHASEAERAH) shows a compositional bias: basic and acidic residues. Over residues 941 to 950 (SSESSPESQS) the composition is skewed to low complexity. Residues 999-1011 (PRERLDDNAKEIL) show a composition bias toward basic and acidic residues. Ser-1018 carries the phosphoserine modification. 2 disordered regions span residues 1029–1107 (NRKD…IGTQ) and 1135–1154 (DVDNVVSGHSNVNGVSKSRP). The segment covering 1032 to 1045 (DKAAVKRMLEEDSS) has biased composition (basic and acidic residues). A compositionally biased stretch (polar residues) spans 1073-1107 (PAVNNSTKPVAVTSKNGHSRNGSHAAHSNNVIGTQ). A compositionally biased stretch (low complexity) spans 1138–1150 (NVVSGHSNVNGVS).

It is found in the cytoplasm. This is an uncharacterized protein from Schizosaccharomyces pombe (strain 972 / ATCC 24843) (Fission yeast).